Consider the following 130-residue polypeptide: Ribonuclease P protein component (130 aa).

The protein belongs to the RnpA family. Consists of a catalytic RNA component (M1 or rnpB) and a protein subunit.

The catalysed reaction is Endonucleolytic cleavage of RNA, removing 5'-extranucleotides from tRNA precursor.. In terms of biological role, RNaseP catalyzes the removal of the 5'-leader sequence from pre-tRNA to produce the mature 5'-terminus. It can also cleave other RNA substrates such as 4.5S RNA. The protein component plays an auxiliary but essential role in vivo by binding to the 5'-leader sequence and broadening the substrate specificity of the ribozyme. This Azotobacter vinelandii (strain DJ / ATCC BAA-1303) protein is Ribonuclease P protein component.